Here is a 407-residue protein sequence, read N- to C-terminus: Negative RAS protein regulator protein (407 aa).

3 disordered regions span residues 51–94, 165–187, and 241–273; these read PRII…ARQI, HPSK…NLNF, and NNNN…NVFS. Positions 55-73 are enriched in low complexity; it reads SSSNSNSNSNSNSNSNSNS. In terms of domain architecture, Myb-like spans 90 to 158; sequence SARQIRKKWK…QCHDRFKVLY (69 aa). Over residues 165–177 the composition is skewed to basic residues; the sequence is HPSKKSKQKKKKS. Low complexity predominate over residues 241-270; the sequence is NNNNNNINNSNNSNNNNSNNINRNSNHSTN.

Its subcellular location is the nucleus. In terms of biological role, negative regulator of the Ras-cyclic AMP pathway. Negatively regulate the activity of normal but not mutationally activated Ras proteins. The down-regulatory effect of RPI1 requires the presence of one of the two Ras GTPase activators, IRA1 and IRA2. The polypeptide is Negative RAS protein regulator protein (RPI1) (Saccharomyces cerevisiae (strain ATCC 204508 / S288c) (Baker's yeast)).